The chain runs to 91 residues: Elongation factor 1-beta (91 aa).

Belongs to the EF-1-beta/EF-1-delta family.

Its function is as follows. Promotes the exchange of GDP for GTP in EF-1-alpha/GDP, thus allowing the regeneration of EF-1-alpha/GTP that could then be used to form the ternary complex EF-1-alpha/GTP/AAtRNA. This chain is Elongation factor 1-beta, found in Sulfurisphaera tokodaii (strain DSM 16993 / JCM 10545 / NBRC 100140 / 7) (Sulfolobus tokodaii).